The following is a 673-amino-acid chain: Glycine--tRNA ligase beta subunit (673 aa).

Belongs to the class-II aminoacyl-tRNA synthetase family. In terms of assembly, tetramer of two alpha and two beta subunits.

Its subcellular location is the cytoplasm. The enzyme catalyses tRNA(Gly) + glycine + ATP = glycyl-tRNA(Gly) + AMP + diphosphate. In Lactococcus lactis subsp. lactis (strain IL1403) (Streptococcus lactis), this protein is Glycine--tRNA ligase beta subunit.